Consider the following 734-residue polypeptide: MALRFPRFSQGLAQDPTTRRIWFGIATAHDFESHDDITEERLYQNIFASHFGQLAIIFLWTSGNLFHVAWQGNFETWVQDPLHVRPIAHAIWDPHFGQPAVEAFTRGGALGPVNIAYSGVYQWWYTIGLRTNEDLYTGALFLLFLSALSLIGGWLHLQPKWKPRVSWFKNAESRLNHHLSGLFGVSSLAWTGHLVHVAIPASRGESVRWNNFLNVLPHPQGLGPLFTGQWNLYAQNPDSSSHLFGTSQGSGTAILTLLGGFHPQTQSLWLTDMAHHHLAIAILFLIAGHMYRTNFGIGHSIKDLLEAHIPPGGRLGRGHKGLYDTINNSIHFQLGLALASLGVITSLVAQHMYSLPAYAFIAQDFTTQAALYTHHQYIAGFIMTGAFAHGAIFFIRDYNPEQNEDNVLARMLDHKEAIISHLSWASLFLGFHTLGLYVHNDVMLAFGTPEKQILIEPIFAQWIQSAHGKTSYGFDVLLSSTSGPAFNAGRSIWLPGWLNAINENSNSLFLTIGPGDFLVHHAIALGLHTTTLILVKGALDARGSKLMPDKKDFGYSFPCDGPGRGGTCDISAWDAFYLAVFWMLNTIGWVTFYWHWKHITLWQGNVSQFNESSTYLMGWLRDYLWLNSSQLINGYNPFGMNSLSVWAWMFLFGHLVWATGFMFLISWRGYWQELIETLAWAHERTPLANLIRWKDKPVALSIVQARLVGLAHFSVGYIFTYAAFLIASTSGKFG.

Helical transmembrane passes span 46 to 69 (IFAS…FHVA), 135 to 158 (LYTG…LHLQ), 175 to 199 (LNHH…HVAI), 273 to 291 (MAHH…GHMY), 330 to 353 (IHFQ…QHMY), 369 to 395 (AALY…IFFI), 417 to 439 (AIIS…LYVH), and 517 to 535 (FLVH…LILV). The [4Fe-4S] cluster site is built by cysteine 559 and cysteine 568. 2 helical membrane passes run 575 to 596 (AFYL…YWHW) and 643 to 665 (LSVW…MFLI). Chlorophyll a-binding residues include histidine 654, methionine 662, and tyrosine 670. Residue tryptophan 671 participates in phylloquinone binding. Residues 707-727 (LVGLAHFSVGYIFTYAAFLIA) traverse the membrane as a helical segment.

The protein belongs to the PsaA/PsaB family. As to quaternary structure, the PsaA/B heterodimer binds the P700 chlorophyll special pair and subsequent electron acceptors. PSI consists of a core antenna complex that captures photons, and an electron transfer chain that converts photonic excitation into a charge separation. The eukaryotic PSI reaction center is composed of at least 11 subunits. P700 is a chlorophyll a/chlorophyll a' dimer, A0 is one or more chlorophyll a, A1 is one or both phylloquinones and FX is a shared 4Fe-4S iron-sulfur center. is required as a cofactor.

The protein resides in the plastid. It localises to the chloroplast thylakoid membrane. It catalyses the reaction reduced [plastocyanin] + hnu + oxidized [2Fe-2S]-[ferredoxin] = oxidized [plastocyanin] + reduced [2Fe-2S]-[ferredoxin]. In terms of biological role, psaA and PsaB bind P700, the primary electron donor of photosystem I (PSI), as well as the electron acceptors A0, A1 and FX. PSI is a plastocyanin-ferredoxin oxidoreductase, converting photonic excitation into a charge separation, which transfers an electron from the donor P700 chlorophyll pair to the spectroscopically characterized acceptors A0, A1, FX, FA and FB in turn. Oxidized P700 is reduced on the lumenal side of the thylakoid membrane by plastocyanin. The polypeptide is Photosystem I P700 chlorophyll a apoprotein A2 (Crucihimalaya wallichii (Rock-cress)).